The chain runs to 171 residues: Vimentin-type intermediate filament-associated coiled-coil protein (171 aa).

Residues 7–98 (LQIREANAHL…QRDQMIQELQ (92 aa)) are a coiled coil. A disordered region spans residues 126-171 (ELGPLPSSHSHGAQLLPDGPGPPLGNSMREEEGQDDQQPAVFGTTV).

In terms of tissue distribution, expressed in brain, heart, kidney, liver, lung, skeletal muscle, spleen and testis. Within the kidney expression is pronounced within glomeruli.

It localises to the cytoplasm. In Rattus norvegicus (Rat), this protein is Vimentin-type intermediate filament-associated coiled-coil protein (Vmac).